Reading from the N-terminus, the 305-residue chain is Ribonuclease BN (305 aa).

Residues His-64, His-66, Asp-68, His-69, His-141, Asp-212, and His-270 each contribute to the Zn(2+) site. Asp-68 functions as the Proton acceptor in the catalytic mechanism.

The protein belongs to the RNase Z family. RNase BN subfamily. Homodimer. Zn(2+) is required as a cofactor.

Zinc phosphodiesterase, which has both exoribonuclease and endoribonuclease activities. The sequence is that of Ribonuclease BN from Salmonella agona (strain SL483).